The chain runs to 274 residues: 4-deoxy-L-threo-5-hexosulose-uronate ketol-isomerase (274 aa).

4 residues coordinate Zn(2+): H192, H194, E199, and H241.

It belongs to the KduI family. Zn(2+) is required as a cofactor.

The catalysed reaction is 5-dehydro-4-deoxy-D-glucuronate = 3-deoxy-D-glycero-2,5-hexodiulosonate. The protein operates within glycan metabolism; pectin degradation; 2-dehydro-3-deoxy-D-gluconate from pectin: step 4/5. Its function is as follows. Catalyzes the isomerization of 5-dehydro-4-deoxy-D-glucuronate to 3-deoxy-D-glycero-2,5-hexodiulosonate. The sequence is that of 4-deoxy-L-threo-5-hexosulose-uronate ketol-isomerase from Cereibacter sphaeroides (strain ATCC 17025 / ATH 2.4.3) (Rhodobacter sphaeroides).